We begin with the raw amino-acid sequence, 638 residues long: MELQTIPNNISLANGDSKGVQLTFKNIVYKVDNKKYKKLVKKQEKAKKKNDTESSTGDMNTGVSTTIEKELTILNNVSGVIEKGELVALMGPSGSGKSTLLDILAQRKSTGKITGQLLVNGKEIGEAYKKYCSYVTQEDVLLQTSTVFETLKFYADLKLPGVSEIEKIKRVEQIIEDIGLTKRTHSKIGGVLPGGILMKGLSGGEKRRVSIGCGLVTNPSLIFLDEPTSGLDSVAALQIMKTLLNLTLKGVTVICSIHQPRPEIFALFNKVMVIIKGKMIYSGSNILEYFESLGYPCPNNTNPADFCLDSAVEIGEGERYTEICNQWQKIWENELLNEIEYPPVNVEKPKTASWGYQYWILLGRTWKDFLRNQGNFVARVGTAVVTGLLFGVCFAGLKETEADVQKILGTIFFLITGLNLTPFAVISLFLSGRTLFNAERASKIYHSFPYYMAMVTVETLIVFLVALINAAICYLFAHLRWTAGHFFFAIMVYFFVHLLSDFMISTIANLTGTSDMTFAYGSGLSVIYMLFAGFYVPTNELPKSFGWLHWVNPLFYSFVSLVVNQFEDLPLECTRPNIPVGNSTIQIPCQFSNGNQVIEYYGIDDWTRGSSFGVVVAWTVFFFWTSYLALHFLNKEKR.

The disordered stretch occupies residues K42–T61. The 244-residue stretch at D58–T301 folds into the ABC transporter domain. Residue G91–S98 participates in ATP binding. Residues G374–L633 enclose the ABC transmembrane type-2 domain. Transmembrane regions (helical) follow at residues F376–G396, T410–L430, T459–L479, G484–I504, M516–V536, S544–N564, and F612–F632.

Belongs to the ABC transporter superfamily. ABCG family. Eye pigment precursor importer (TC 3.A.1.204) subfamily.

The protein resides in the membrane. The sequence is that of ABC transporter G family member 12 (abcG12) from Dictyostelium discoideum (Social amoeba).